The primary structure comprises 201 residues: Ras-related protein Rab-9A (201 aa).

An N-acetylalanine modification is found at alanine 2. GTP contacts are provided by glycine 17, valine 18, glycine 19, lysine 20, serine 21, serine 22, aspartate 33, serine 34, histidine 38, and threonine 39. Residue serine 21 coordinates Mg(2+). Residues 31–42 (KFDSQLFHTIGV) carry the Switch 1 motif. Serine 34 is subject to Phosphoserine. Threonine 39 and aspartate 62 together coordinate Mg(2+). The short motif at 64–78 (AGQERFRSLRTPFYR) is the Switch 2 element. GTP contacts are provided by glycine 65, asparagine 124, lysine 125, aspartate 127, alanine 155, and lysine 156. Serine 179 is modified (phosphoserine). Residue threonine 187 is modified to Phosphothreonine. 2 S-geranylgeranyl cysteine lipidation sites follow: cysteine 200 and cysteine 201.

This sequence belongs to the small GTPase superfamily. Rab family. In terms of assembly, interacts (preferentially in its GTP-bound form) with GCC2 (via its GRIP domain). Interacts (GTP-bound form) with SGSM1; the GDP-bound form has much lower affinity for SGSM1. Interacts with SGSM2. The GTP-bound form but not the GDP-bound form interacts with HPS4. The GTP-bound form but not the GDP-bound form interacts with BLOC-3 complex (heterodimer of HPS1 and HPS4) but does not interact with HPS1 alone. Interacts (GTP-bound form) with NDE1; two RAB9A-GTP molecules lie on the opposite sides of the NDE1 homodimer; the interaction leads to RAB9A-dynein motor tethering. Interacts (GTP-bound form) with NDEL1. Requires Mg(2+) as cofactor.

The protein resides in the cell membrane. The protein localises to the endoplasmic reticulum membrane. It is found in the golgi apparatus membrane. It localises to the late endosome. Its subcellular location is the cytoplasmic vesicle. The protein resides in the phagosome membrane. The protein localises to the phagosome. It is found in the cytoplasmic vesicle membrane. It localises to the melanosome. It catalyses the reaction GTP + H2O = GDP + phosphate + H(+). With respect to regulation, regulated by guanine nucleotide exchange factors (GEFs) which promote the exchange of bound GDP for free GTP. Regulated by GTPase activating proteins (GAPs) which increase the GTP hydrolysis activity. Inhibited by GDP dissociation inhibitors (GDIs). Its function is as follows. The small GTPases Rab are key regulators of intracellular membrane trafficking, from the formation of transport vesicles to their fusion with membranes. Rabs cycle between an inactive GDP-bound form and an active GTP-bound form that is able to recruit to membranes different sets of downstream effectors directly responsible for vesicle formation, movement, tethering and fusion. RAB9A is involved in the transport of proteins between the endosomes and the trans-Golgi network (TGN). Specifically uses NDE1/NDEL1 as an effector to interact with the dynein motor complex in order to control retrograde trafficking of RAB9-associated late endosomes to the TGN. Involved in the recruitment of SGSM2 to melanosomes and is required for the proper trafficking of melanogenic enzymes TYR, TYRP1 and DCT/TYRP2 to melanosomes in melanocytes. This Mus musculus (Mouse) protein is Ras-related protein Rab-9A.